Consider the following 64-residue polypeptide: Large ribosomal subunit protein bL35 (64 aa).

Belongs to the bacterial ribosomal protein bL35 family.

The polypeptide is Large ribosomal subunit protein bL35 (Wolinella succinogenes (strain ATCC 29543 / DSM 1740 / CCUG 13145 / JCM 31913 / LMG 7466 / NCTC 11488 / FDC 602W) (Vibrio succinogenes)).